A 111-amino-acid chain; its full sequence is Nucleoid-associated protein Cpha266_1171 (111 aa).

It belongs to the YbaB/EbfC family. As to quaternary structure, homodimer.

The protein localises to the cytoplasm. Its subcellular location is the nucleoid. Functionally, binds to DNA and alters its conformation. May be involved in regulation of gene expression, nucleoid organization and DNA protection. The protein is Nucleoid-associated protein Cpha266_1171 of Chlorobium phaeobacteroides (strain DSM 266 / SMG 266 / 2430).